A 75-amino-acid polypeptide reads, in one-letter code: Small ribosomal subunit protein bS18 (75 aa).

Belongs to the bacterial ribosomal protein bS18 family. In terms of assembly, part of the 30S ribosomal subunit. Forms a tight heterodimer with protein bS6.

In terms of biological role, binds as a heterodimer with protein bS6 to the central domain of the 16S rRNA, where it helps stabilize the platform of the 30S subunit. The chain is Small ribosomal subunit protein bS18 from Psychrobacter sp. (strain PRwf-1).